The chain runs to 146 residues: Hemoglobin subunit beta-2 (146 aa).

Residues 2–146 form the Globin domain; sequence EWTDFERATI…VVSSLGRQYH (145 aa). Residues His63 and His92 each contribute to the heme b site.

It belongs to the globin family. In terms of assembly, hb2 is a heterotetramer of two alpha chains and two beta-2 chains. In terms of tissue distribution, red blood cells.

Its function is as follows. Involved in oxygen transport from gills to the various peripheral tissues. The chain is Hemoglobin subunit beta-2 (hbb2) from Pseudaphritis urvillii (Congolli).